A 152-amino-acid chain; its full sequence is Serglycin (152 aa).

An N-terminal signal peptide occupies residues 1-25 (MQVPVGSRLVLALAFVLVWGSSVQG). Positions 26-74 (YPARRARYQWVRCKPNGFFANCIEEKGPQFDLIDESNNIGPPMNNPVLM) are cleaved as a propeptide — activation peptide. Cys-38 and Cys-47 are joined by a disulfide. The segment at 66–115 (PPMNNPVLMEGPSKDFISNYDDYGSGSGSGSGSGSGSGSGSGSGFLGDME) is disordered. A run of 10 repeats spans residues 89–90 (GS), 91–92 (GS), 93–94 (GS), 95–96 (GS), 97–98 (GS), 99–100 (GS), 101–102 (GS), 103–104 (GS), 105–106 (GS), and 107–108 (GS). Residues 89–108 (GSGSGSGSGSGSGSGSGSGS) form a 10 X 2 AA tandem repeats of G-S region. Gly residues predominate over residues 90–110 (SGSGSGSGSGSGSGSGSGSGF). Ser-92 and Ser-94 each carry an O-linked (Xyl...) (glycosaminoglycan) serine glycan. Residues Ser-98, Ser-100, Ser-102, Ser-104, Ser-106, and Ser-108 are each glycosylated (O-linked (Xyl...) (glycosaminoglycan) serine).

The protein belongs to the serglycin family. Binds to activated CD44 and to GZMB. Post-translationally, O-glycosylated; contains chondroitin sulfate and heparan sulfate.

The protein localises to the cytoplasmic granule. It is found in the cytolytic granule. Its subcellular location is the secreted. The protein resides in the extracellular space. It localises to the golgi apparatus. Functionally, plays a role in formation of mast cell secretory granules and mediates storage of various compounds in secretory vesicles. Required for storage of some proteases in both connective tissue and mucosal mast cells and for storage of granzyme B in T-lymphocytes. Plays a role in localizing neutrophil elastase in azurophil granules of neutrophils. Mediates processing of MMP2. Plays a role in cytotoxic cell granule-mediated apoptosis by forming a complex with granzyme B which is delivered to cells by perforin to induce apoptosis. Regulates the secretion of TNF-alpha and may also regulate protease secretion. Inhibits bone mineralization. This is Serglycin (Srgn) from Mus musculus (Mouse).